Reading from the N-terminus, the 582-residue chain is 5-aminolevulinate synthase, erythroid-specific, mitochondrial (582 aa).

Residues 1 to 44 constitute a mitochondrion transit peptide; that stretch reads MLLQRCPVLIRSPTAILGKMIKTHQFLIGIGRCPILATQGTTCS. Arginine 158 contributes to the succinyl-CoA binding site. Cysteine 253 and phenylalanine 254 together coordinate pyridoxal 5'-phosphate. Succinyl-CoA-binding residues include serine 275 and lysine 294. The pyridoxal 5'-phosphate site is built by serine 327, histidine 355, and threonine 383. Residue lysine 386 is part of the active site. Residue lysine 386 is modified to N6-(pyridoxal phosphate)lysine. Residues threonine 415 and threonine 416 each contribute to the pyridoxal 5'-phosphate site. Threonine 503 lines the succinyl-CoA pocket.

This sequence belongs to the class-II pyridoxal-phosphate-dependent aminotransferase family. In terms of assembly, homodimer. Pyridoxal 5'-phosphate serves as cofactor.

Its subcellular location is the mitochondrion inner membrane. It carries out the reaction succinyl-CoA + glycine + H(+) = 5-aminolevulinate + CO2 + CoA. It functions in the pathway porphyrin-containing compound metabolism; protoporphyrin-IX biosynthesis; 5-aminolevulinate from glycine: step 1/1. Its function is as follows. Catalyzes the pyridoxal 5'-phosphate (PLP)-dependent condensation of succinyl-CoA and glycine to form aminolevulinic acid (ALA), with CoA and CO2 as by-products. Contributes significantly to heme formation during erythropoiesis. The protein is 5-aminolevulinate synthase, erythroid-specific, mitochondrial (ALAS2) of Delphinapterus leucas (Beluga whale).